Reading from the N-terminus, the 279-residue chain is Toxin TxP-I (279 aa).

The N-terminal stretch at 1 to 14 (MNLFFLFIIPTILA) is a signal peptide. Positions 15-27 (VKPFRSFNNISLI) are excised as a propeptide.

In terms of processing, contains several disulfide bonds. As to expression, posterior glands which appear to be connected with the stylet through a series of ducts.

It localises to the secreted. In terms of biological role, part of a complex mixture of neurotoxins which P.tritici utilizes to capture prey. It has contracting-paralyzing activity in insects. The sequence is that of Toxin TxP-I from Pyemotes tritici (Straw itch mite).